A 325-amino-acid chain; its full sequence is MNFWYSRSKIAYLLLPFSLLFWLISTIRRFLFQSGILSAYKAPVPVIVVGNLSVGGNGKTPVVIWLVQQLQMRGLNCGVISRGYGSQSEVYPLLVNAETDPVRGGDEPVLIAKRAGVPVCISPNRQQAIELLLSSYPCDVIVSDDGLQHYKLQRDIEIVVMDAVRGLGNGWVLPAGPLRELPSRLADADFIIGNGGENVYTDTAMRLVPHYAINLVTNEKRELNAFEQAIAIAGIGNPDRFFKMLQDEGIRLVSSQAFQDHQKFSADLFARFAPNVPLLMTEKDAVKCGRFAQQNWWYVPVDAEITGEKSAALLDKIEQMTQQGK.

53-60 contacts ATP; it reads SVGGNGKT.

The protein belongs to the LpxK family.

It catalyses the reaction a lipid A disaccharide + ATP = a lipid IVA + ADP + H(+). It functions in the pathway glycolipid biosynthesis; lipid IV(A) biosynthesis; lipid IV(A) from (3R)-3-hydroxytetradecanoyl-[acyl-carrier-protein] and UDP-N-acetyl-alpha-D-glucosamine: step 6/6. Transfers the gamma-phosphate of ATP to the 4'-position of a tetraacyldisaccharide 1-phosphate intermediate (termed DS-1-P) to form tetraacyldisaccharide 1,4'-bis-phosphate (lipid IVA). This is Tetraacyldisaccharide 4'-kinase from Actinobacillus succinogenes (strain ATCC 55618 / DSM 22257 / CCUG 43843 / 130Z).